The sequence spans 540 residues: Glucose-6-phosphate isomerase (540 aa).

Glu346 acts as the Proton donor in catalysis. Catalysis depends on residues His377 and Lys505.

It belongs to the GPI family.

Its subcellular location is the cytoplasm. It carries out the reaction alpha-D-glucose 6-phosphate = beta-D-fructose 6-phosphate. It functions in the pathway carbohydrate biosynthesis; gluconeogenesis. It participates in carbohydrate degradation; glycolysis; D-glyceraldehyde 3-phosphate and glycerone phosphate from D-glucose: step 2/4. Functionally, catalyzes the reversible isomerization of glucose-6-phosphate to fructose-6-phosphate. The polypeptide is Glucose-6-phosphate isomerase (Francisella tularensis subsp. tularensis (strain WY96-3418)).